The primary structure comprises 236 residues: Purine nucleoside phosphorylase CA_C1699 (236 aa).

Zn(2+) contacts are provided by His-62, Cys-97, and His-114.

This sequence belongs to the purine nucleoside phosphorylase YfiH/LACC1 family. As to quaternary structure, homodimer. The cofactor is Cu(2+). Zn(2+) serves as cofactor.

It catalyses the reaction adenosine + phosphate = alpha-D-ribose 1-phosphate + adenine. The catalysed reaction is S-methyl-5'-thioadenosine + phosphate = 5-(methylsulfanyl)-alpha-D-ribose 1-phosphate + adenine. It carries out the reaction inosine + phosphate = alpha-D-ribose 1-phosphate + hypoxanthine. The enzyme catalyses adenosine + H2O + H(+) = inosine + NH4(+). Functionally, purine nucleoside enzyme that catalyzes the phosphorolysis of adenosine and inosine nucleosides, yielding D-ribose 1-phosphate and the respective free bases, adenine and hypoxanthine. Also catalyzes the phosphorolysis of S-methyl-5'-thioadenosine into adenine and S-methyl-5-thio-alpha-D-ribose 1-phosphate. Also has adenosine deaminase activity. The chain is Purine nucleoside phosphorylase CA_C1699 from Clostridium acetobutylicum (strain ATCC 824 / DSM 792 / JCM 1419 / IAM 19013 / LMG 5710 / NBRC 13948 / NRRL B-527 / VKM B-1787 / 2291 / W).